We begin with the raw amino-acid sequence, 552 residues long: Membrane protein insertase YidC (552 aa).

Residues 6-26 (NLLLAAIAAVILMLFIRWNHF) traverse the membrane as a helical segment. Composition is skewed to polar residues over residues 32-41 (QHQAGNTPAG) and 60-70 (PTASDTPQATA). Residues 32-70 (QHQAGNTPAGSSIAAIAPDSNGDIPSAVPTASDTPQATA) form a disordered region. A run of 4 helical transmembrane segments spans residues 365–387 (WGLA…SAAS), 431–451 (FGGC…YWVL), 472–492 (MDPY…MQKL), and 508–528 (LPFV…LYWV).

The protein belongs to the OXA1/ALB3/YidC family. Type 1 subfamily. In terms of assembly, interacts with the Sec translocase complex via SecD. Specifically interacts with transmembrane segments of nascent integral membrane proteins during membrane integration.

Its subcellular location is the cell inner membrane. Functionally, required for the insertion and/or proper folding and/or complex formation of integral membrane proteins into the membrane. Involved in integration of membrane proteins that insert both dependently and independently of the Sec translocase complex, as well as at least some lipoproteins. Aids folding of multispanning membrane proteins. The polypeptide is Membrane protein insertase YidC (Cellvibrio japonicus (strain Ueda107) (Pseudomonas fluorescens subsp. cellulosa)).